A 360-amino-acid polypeptide reads, in one-letter code: SPRY domain-containing SOCS box protein 3 (360 aa).

The disordered stretch occupies residues 20 to 55; that stretch reads RDQDARSPTLPAEEEAWGYDSDGQHSNSDSDTDLLH. The region spanning 85–274 is the B30.2/SPRY domain; sequence LHTFHQIKSC…MKVIRSCCCR (190 aa). Positions 264–315 constitute an SOCS box domain; sequence SMKVIRSCCCRTSLQYLCCARLRQLLPDSVDSLEVLPLPPGLKQVLGNKLGW. The interval 323 to 350 is disordered; sequence RSNQHKGDTSATTSCGSDSDSSCTPGQD. Low complexity predominate over residues 331–346; that stretch reads TSATTSCGSDSDSSCT.

This sequence belongs to the SPSB family. Substrate-recognition component of the ECS(SPSB3) complex, composed of spsb3, cul5, elob, elob and rnf7/rbx2.

The protein resides in the nucleus. It functions in the pathway protein modification; protein ubiquitination. Its function is as follows. Substrate-recognition component of a cullin-5-RING E3 ubiquitin-protein ligase complex (ECS complex, also named CRL5 complex), which mediates the ubiquitination and subsequent proteasomal degradation of target proteins. This Xenopus tropicalis (Western clawed frog) protein is SPRY domain-containing SOCS box protein 3 (spsb3).